Here is a 259-residue protein sequence, read N- to C-terminus: Factor V activator (259 aa).

Positions 1 to 18 (MVLIRVLANLLVLQLSYA) are cleaved as a signal peptide. The propeptide occupies 19–24 (QKSSEL). One can recognise a Peptidase S1 domain in the interval 25–251 (VVGGDECDIN…YTDWIQSIIA (227 aa)). 6 cysteine pairs are disulfide-bonded: C31–C165, C52–C68, C100–C258, C144–C212, C176–C191, and C202–C227. Residues H67 and D112 each act as charge relay system in the active site. The Charge relay system role is filled by S206. An N-linked (GlcNAc...) asparagine glycan is attached at N253.

Belongs to the peptidase S1 family. Snake venom subfamily. In terms of assembly, monomer. N-glycosylated. Contains 4.4% of hexoses, 4.4% of hexosamines and 3.1% of sialic acids. As to expression, expressed by the venom gland.

The protein resides in the secreted. It carries out the reaction Fully activates human clotting factor V by a single cleavage at the 1545-Trp-Tyr-Leu-Arg-|-Ser-Asn-Asn-Gly-1552 bond. Cattle, but not rabbit, factor V is cleaved, and no other proteins of the clotting system are attacked. Esterase activity is observed on Bz-Arg-OEt and Tos-Arg-OMe, and amidase activity on Phe-pipecolyl-Arg-NHPhNO2.. Its activity is regulated as follows. Inhibited by D-Phe-Pro-Arg-chloromethyl ketone (FPRCK) (98%), PMSF (93%), benzamidine (67%), and diisopropylfluorophosphate (DFP). Is not inhibited by BPTI, antithrombin and EDTA. Its function is as follows. Venom serine protease that converts factor V (F5) to the active form Va in the presence of calcium ions and phospholipids. It cleaves the Arg(1545)-Ser(1546) linkage in the human factor V molecule. Has hydrolytic activities against BAEE (1.2 U/mg), TAME, and Pro-Phe-Arg-MCA (4.9 U/mg). Shows coagulant activity. This chain is Factor V activator, found in Macrovipera lebetinus (Levantine viper).